Reading from the N-terminus, the 246-residue chain is 3'(2'),5'-bisphosphate nucleotidase CysQ (246 aa).

5 residues coordinate Mg(2+): E64, D83, L85, D86, and D205. E64 contributes to the substrate binding site. Residues 85–88 (LDGT) and D205 contribute to the substrate site.

It belongs to the inositol monophosphatase superfamily. CysQ family. The cofactor is Mg(2+).

Its subcellular location is the cell inner membrane. It catalyses the reaction adenosine 3',5'-bisphosphate + H2O = AMP + phosphate. Converts adenosine-3',5'-bisphosphate (PAP) to AMP. This Salmonella typhimurium (strain LT2 / SGSC1412 / ATCC 700720) protein is 3'(2'),5'-bisphosphate nucleotidase CysQ.